A 250-amino-acid chain; its full sequence is MRNIKLIIEYDGTAYCGWQVQPNGRTVQEVLQEALAAMLGEKTPLHGSGRTDAGVHARGMVACFKTDKAMPLRAFREGLNCLLPGDIAVREACEVPLEFHPRFDAHAKHYRYTILLDDLRSPLSRLTVWRLKGKLDIQAMRAACAAFVGEHDFAAFRASNCAAKTTVRRIYSMDLVQEGCLLHLDVKGSGFLKNMVRIITGTLIEVGQGKKSVEDVARLLQGGDRQQNSGMTVPPQGLCLMQVYYQEKCD.

The active-site Nucleophile is the Asp52. Tyr110 contacts substrate.

This sequence belongs to the tRNA pseudouridine synthase TruA family. Homodimer.

The catalysed reaction is uridine(38/39/40) in tRNA = pseudouridine(38/39/40) in tRNA. In terms of biological role, formation of pseudouridine at positions 38, 39 and 40 in the anticodon stem and loop of transfer RNAs. This chain is tRNA pseudouridine synthase A, found in Citrifermentans bemidjiense (strain ATCC BAA-1014 / DSM 16622 / JCM 12645 / Bem) (Geobacter bemidjiensis).